A 782-amino-acid polypeptide reads, in one-letter code: Cyclic nucleotide-gated channel beta-3 (782 aa).

Disordered regions lie at residues 1–111 (MFKS…PKSK) and 147–168 (GDIS…PSTQ). Over 1–213 (MFKSLTIKSN…SIDSYTDRLY (213 aa)) the chain is Cytoplasmic. 2 stretches are compositionally biased toward basic and acidic residues: residues 13–25 (KPRE…KQDP) and 57–73 (EESH…KNSL). Composition is skewed to polar residues over residues 74 to 83 (RDLTTNPNHQ) and 152 to 168 (PEAS…PSTQ). The helical transmembrane segment at 214–237 (LLWLLLVTIAYNWNCWLIPLRLVF) threads the bilayer. The Extracellular segment spans residues 238–244 (PYQTPDN). A helical transmembrane segment spans residues 245–265 (THYWFITDITCDIIYLCDMLL). Residues 266 to 294 (IQPRLQFIKGGDIMVDSNELKRHYRSSTK) lie on the Cytoplasmic side of the membrane. The helical transmembrane segment at 295-312 (FQLDVASVMPFDVFYLFF) threads the bilayer. Over 313-315 (GFN) the chain is Extracellular. The chain crosses the membrane as a helical span at residues 316–330 (PVFRMNRILKYTSFF). Topologically, residues 331–343 (EFNHHLESIMDKA) are cytoplasmic. Residues 343 to 442 (AYIYRVIRTT…IGQMQDVIGA (100 aa)) form an ion conduction pathway region. The helical transmembrane segment at 344 to 366 (YIYRVIRTTGYLLYTLHINACIY) threads the bilayer. The Extracellular segment spans residues 367–388 (YWASDYEGIGSTKWVYNGEGNK). 2 helical membrane-spanning segments follow: residues 389-415 (YLRC…SFEI) and 416-440 (VFQL…QDVI). The tract at residues 402 to 405 (TIGG) is selectivity filter. The Cytoplasmic segment spans residues 441-782 (GAATANQNNF…TIEVKEKAKQ (342 aa)). The C-linker stretch occupies residues 445 to 521 (ANQNNFRISM…SIISKVELFK (77 aa)). Residues 525–641 (TQMIYDMLLR…LLMKKASVLL (117 aa)) form a cyclic nucleotide-binding domain region. Positions 586, 587, 599, and 600 each coordinate 3',5'-cyclic GMP. The tract at residues 692-724 (EQTIQKTSENSEEGGGKRREYEDKEREPSEKIL) is disordered. Over residues 705-724 (GGGKRREYEDKEREPSEKIL) the composition is skewed to basic and acidic residues.

It belongs to the cyclic nucleotide-gated cation channel (TC 1.A.1.5) family. CNGB3 subfamily. Forms heterotetrameric channels composed of CNGA3 and CNGB3 subunits with 3:1 stoichiometry.

The protein resides in the cell membrane. The catalysed reaction is Ca(2+)(in) = Ca(2+)(out). It catalyses the reaction Na(+)(in) = Na(+)(out). The enzyme catalyses K(+)(in) = K(+)(out). It carries out the reaction NH4(+)(in) = NH4(+)(out). The catalysed reaction is Rb(+)(in) = Rb(+)(out). It catalyses the reaction Li(+)(in) = Li(+)(out). The enzyme catalyses Cs(+)(in) = Cs(+)(out). Functionally, pore-forming subunit of the cone cyclic nucleotide-gated channel. Mediates cone photoresponses at bright light converting transient changes in intracellular cGMP levels into electrical signals. In the dark, cGMP levels are high and keep the channel open enabling a steady inward current carried by Na(+) and Ca(2+) ions that leads to membrane depolarization and neurotransmitter release from synaptic terminals. Upon photon absorption cGMP levels decline leading to channel closure and membrane hyperpolarization that ultimately slows neurotransmitter release and signals the presence of light, the end point of the phototransduction cascade. Conducts cGMP- and cAMP-gated ion currents, with permeability for monovalent and divalent cations. The protein is Cyclic nucleotide-gated channel beta-3 of Canis lupus familiaris (Dog).